A 344-amino-acid polypeptide reads, in one-letter code: Putative F-box/kelch-repeat protein At1g19930 (344 aa).

Residues 8–54 (TELIFSLPNDLLVNILARVSRLDYPILSLVSKRFSSVLTLPELYQTR) enclose the F-box domain. Kelch repeat units follow at residues 122–168 (NIYN…LLDG), 170–195 (IYVTGGCRLTFHGCGDQTDNVVVDGK), 196–241 (LHSC…YYYY), and 243–276 (NENIKWYDTKVRSWRTLNGLKTLPRFARYANVRL).

The sequence is that of Putative F-box/kelch-repeat protein At1g19930 from Arabidopsis thaliana (Mouse-ear cress).